The primary structure comprises 241 residues: Platelet-derived growth factor subunit B (241 aa).

Positions 1–20 (MNRCWALFLSLCCYLRLVSA) are cleaved as a signal peptide. A propeptide spans 21–81 (EGDPIPEELY…ELESLSRGRR (61 aa)) (removed in mature form). Asn63 carries N-linked (GlcNAc...) asparagine glycosylation. Intrachain disulfides connect Cys97–Cys141, Cys130–Cys178, and Cys134–Cys180. The propeptide at 191–241 (TPGSSQEQRAARTPQTRVTIRTVRVRRPPKGKHRKFKHTHDKTALKETLGA) is removed in mature form. A compositionally biased stretch (basic residues) spans 217 to 230 (RPPKGKHRKFKHTH). The tract at residues 217 to 241 (RPPKGKHRKFKHTHDKTALKETLGA) is disordered.

This sequence belongs to the PDGF/VEGF growth factor family. In terms of assembly, antiparallel homodimer; disulfide-linked. Antiparallel heterodimer with PDGFA; disulfide-linked. The PDGFB homodimer interacts with PDGFRA and PDGFRB homodimers, and with heterodimers formed by PDGFRA and PDGFRB. The heterodimer composed of PDGFA and PDGFB interacts with PDGFRB homodimers, and with heterodimers formed by PDGFRA and PDGFRB. Interacts with XLKD1. Interacts with LRP1. Interacts with SORL1 (via the N-terminal ectodomain). Interacts with CD82; this interaction inhibits PDGFB-mediated signaling pathway.

It localises to the secreted. Functionally, growth factor that plays an essential role in the regulation of embryonic development, cell proliferation, cell migration, survival and chemotaxis. Potent mitogen for cells of mesenchymal origin. Required for normal proliferation and recruitment of pericytes and vascular smooth muscle cells in the central nervous system, skin, lung, heart and placenta. Required for normal blood vessel development, and for normal development of kidney glomeruli. Plays an important role in wound healing. Signaling is modulated by the formation of heterodimers with PDGFA. The protein is Platelet-derived growth factor subunit B (PDGFB) of Ovis aries (Sheep).